The following is a 209-amino-acid chain: Small ribosomal subunit protein uS3 (209 aa).

The 70-residue stretch at 38-107 (IRKFIKNKYY…RVVINIEEIK (70 aa)) folds into the KH type-2 domain.

The protein belongs to the universal ribosomal protein uS3 family. Part of the 30S ribosomal subunit. Forms a tight complex with proteins S10 and S14.

In terms of biological role, binds the lower part of the 30S subunit head. Binds mRNA in the 70S ribosome, positioning it for translation. In Thermotoga sp. (strain RQ2), this protein is Small ribosomal subunit protein uS3.